We begin with the raw amino-acid sequence, 284 residues long: ATP synthase subunit beta, chloroplastic (284 aa).

This sequence belongs to the ATPase alpha/beta chains family. As to quaternary structure, F-type ATPases have 2 components, CF(1) - the catalytic core - and CF(0) - the membrane proton channel. CF(1) has five subunits: alpha(3), beta(3), gamma(1), delta(1), epsilon(1). CF(0) has four main subunits: a(1), b(1), b'(1) and c(9-12).

The protein localises to the plastid. It is found in the chloroplast thylakoid membrane. The catalysed reaction is ATP + H2O + 4 H(+)(in) = ADP + phosphate + 5 H(+)(out). Produces ATP from ADP in the presence of a proton gradient across the membrane. The catalytic sites are hosted primarily by the beta subunits. The protein is ATP synthase subunit beta, chloroplastic (atpB) of Asplenium nidus (Bird's nest fern).